The primary structure comprises 194 residues: Ribosome maturation factor RimM (194 aa).

The 99-residue stretch at Asp92–Leu190 folds into the PRC barrel domain.

The protein belongs to the RimM family. Binds ribosomal protein uS19.

The protein localises to the cytoplasm. Its function is as follows. An accessory protein needed during the final step in the assembly of 30S ribosomal subunit, possibly for assembly of the head region. Essential for efficient processing of 16S rRNA. May be needed both before and after RbfA during the maturation of 16S rRNA. It has affinity for free ribosomal 30S subunits but not for 70S ribosomes. The chain is Ribosome maturation factor RimM from Corynebacterium urealyticum (strain ATCC 43042 / DSM 7109).